Here is a 331-residue protein sequence, read N- to C-terminus: Glycerol-3-phosphate dehydrogenase [NAD(P)+] (331 aa).

Residues W11, R30, and K105 each contribute to the NADPH site. Residues K105, G134, and S136 each contribute to the sn-glycerol 3-phosphate site. NADPH is bound at residue A138. 5 residues coordinate sn-glycerol 3-phosphate: K189, D242, S252, R253, and N254. K189 serves as the catalytic Proton acceptor. R253 contacts NADPH. Positions 277 and 279 each coordinate NADPH.

This sequence belongs to the NAD-dependent glycerol-3-phosphate dehydrogenase family.

The protein localises to the cytoplasm. It catalyses the reaction sn-glycerol 3-phosphate + NAD(+) = dihydroxyacetone phosphate + NADH + H(+). The enzyme catalyses sn-glycerol 3-phosphate + NADP(+) = dihydroxyacetone phosphate + NADPH + H(+). It functions in the pathway membrane lipid metabolism; glycerophospholipid metabolism. Functionally, catalyzes the reduction of the glycolytic intermediate dihydroxyacetone phosphate (DHAP) to sn-glycerol 3-phosphate (G3P), the key precursor for phospholipid synthesis. The chain is Glycerol-3-phosphate dehydrogenase [NAD(P)+] from Janthinobacterium sp. (strain Marseille) (Minibacterium massiliensis).